The following is a 139-amino-acid chain: Trafficking protein particle complex subunit 2-like protein (139 aa).

It belongs to the TRAPP small subunits family. Sedlin subfamily.

The protein localises to the cytoplasm. It is found in the perinuclear region. It localises to the endoplasmic reticulum. Its subcellular location is the golgi apparatus. In terms of biological role, may play a role in vesicular transport from endoplasmic reticulum to Golgi. This is Trafficking protein particle complex subunit 2-like protein (trappc2l) from Xenopus tropicalis (Western clawed frog).